The following is a 284-amino-acid chain: F-box only protein 6 (284 aa).

The 48-residue stretch at 1–48 (MVNINELPENILLELFTHVPAPQLLRNCRLVCSLWRDLIDVMTLWKRK) folds into the F-box domain. Residues 69-250 (FYILCSLQRN…VTNSSIIVSH (182 aa)) enclose the FBA domain. Phosphoserine occurs at positions 249, 268, 275, 278, and 283.

As to quaternary structure, part of a SCF (SKP1-cullin-F-box) protein ligase complex. Interacts with VCP, CHEK1 and CUL1.

It is found in the cytoplasm. It functions in the pathway protein modification; protein ubiquitination. In terms of biological role, substrate-recognition component of some SCF (SKP1-CUL1-F-box protein)-type E3 ubiquitin ligase complexes. Involved in endoplasmic reticulum-associated degradation pathway (ERAD) for misfolded lumenal proteins by recognizing and binding sugar chains on unfolded glycoproteins that are retrotranslocated into the cytosol and promoting their ubiquitination and subsequent degradation. Able to recognize and bind denatured glycoproteins, which are modified with not only high-mannose but also complex-type oligosaccharides. Also recognizes sulfated glycans. Also involved in DNA damage response by specifically recognizing activated CHEK1 (phosphorylated on 'Ser-345'), promoting its ubiquitination and degradation. Ubiquitination of CHEK1 is required to ensure that activated CHEK1 does not accumulate as cells progress through S phase, or when replication forks encounter transient impediments during normal DNA replication. This Rattus norvegicus (Rat) protein is F-box only protein 6 (Fbxo6).